The primary structure comprises 255 residues: Phosphate import ATP-binding protein PstB (255 aa).

The ABC transporter domain maps to 9-250 (MYAQGLQFYY…PRNKQTEDYI (242 aa)). 41-48 (GPSGCGKS) provides a ligand contact to ATP.

Belongs to the ABC transporter superfamily. Phosphate importer (TC 3.A.1.7) family. In terms of assembly, the complex is composed of two ATP-binding proteins (PstB), two transmembrane proteins (PstC and PstA) and a solute-binding protein (PstS).

Its subcellular location is the cell inner membrane. The enzyme catalyses phosphate(out) + ATP + H2O = ADP + 2 phosphate(in) + H(+). Functionally, part of the ABC transporter complex PstSACB involved in phosphate import. Responsible for energy coupling to the transport system. This Nitratidesulfovibrio vulgaris (strain ATCC 29579 / DSM 644 / CCUG 34227 / NCIMB 8303 / VKM B-1760 / Hildenborough) (Desulfovibrio vulgaris) protein is Phosphate import ATP-binding protein PstB.